The primary structure comprises 298 residues: Thymidylate synthase (298 aa).

Residues Arg25 and 159-160 (RR) contribute to the dUMP site. The Nucleophile role is filled by Cys179. Residues 200-203 (RSCD), Asn211, and 241-243 (HLY) each bind dUMP. Residue Asp203 participates in (6R)-5,10-methylene-5,6,7,8-tetrahydrofolate binding. Ala297 contributes to the (6R)-5,10-methylene-5,6,7,8-tetrahydrofolate binding site.

This sequence belongs to the thymidylate synthase family. Bacterial-type ThyA subfamily. In terms of assembly, homodimer.

It is found in the cytoplasm. The catalysed reaction is dUMP + (6R)-5,10-methylene-5,6,7,8-tetrahydrofolate = 7,8-dihydrofolate + dTMP. The protein operates within pyrimidine metabolism; dTTP biosynthesis. In terms of biological role, catalyzes the reductive methylation of 2'-deoxyuridine-5'-monophosphate (dUMP) to 2'-deoxythymidine-5'-monophosphate (dTMP) while utilizing 5,10-methylenetetrahydrofolate (mTHF) as the methyl donor and reductant in the reaction, yielding dihydrofolate (DHF) as a by-product. This enzymatic reaction provides an intracellular de novo source of dTMP, an essential precursor for DNA biosynthesis. The polypeptide is Thymidylate synthase (Rhodopseudomonas palustris (strain BisA53)).